Consider the following 106-residue polypeptide: UPF0145 protein azo0572 (106 aa).

The protein belongs to the UPF0145 family.

The polypeptide is UPF0145 protein azo0572 (Azoarcus sp. (strain BH72)).